We begin with the raw amino-acid sequence, 280 residues long: Small ribosomal subunit protein uS3 (280 aa).

A KH type-2 domain is found at 38–106; the sequence is IRRLLSTGLE…QVQLNILEVR (69 aa). Positions 215–280 are disordered; that stretch reads AAAAPAGAER…PAAEPQSTES (66 aa). Positions 238–280 are enriched in low complexity; sequence SGASGTTATGTEAGRAAASADESTAAGQPAEAAPAAEPQSTES.

The protein belongs to the universal ribosomal protein uS3 family. As to quaternary structure, part of the 30S ribosomal subunit. Forms a tight complex with proteins S10 and S14.

Functionally, binds the lower part of the 30S subunit head. Binds mRNA in the 70S ribosome, positioning it for translation. In Mycolicibacterium paratuberculosis (strain ATCC BAA-968 / K-10) (Mycobacterium paratuberculosis), this protein is Small ribosomal subunit protein uS3.